Here is a 1013-residue protein sequence, read N- to C-terminus: PHD finger protein 20-like protein 1 (1013 aa).

The Tudor 1 domain occupies 11–71 (ITFEIGARLE…SNRLRPLERP (61 aa)). Residues Lys-75 and Lys-79 each participate in a glycyl lysine isopeptide (Lys-Gly) (interchain with G-Cter in SUMO2) cross-link. A Tudor 2 domain is found at 85–141 (FDFKAGEEVLARWTDCRYYPAKIEAINKEGTFTVQFYDGVIRCLKRMHIKAMPEDAK). Disordered stretches follow at residues 183–206 (AKNK…RDGG), 309–368 (EQAI…TPKS), 389–454 (VINK…QSSV), and 482–511 (VTGS…FANP). A compositionally biased stretch (polar residues) spans 315-346 (KPQSQKKNEAVISSSANTQKPALLSSTLSSGK). Ser-368 carries the post-translational modification Phosphoserine. The segment covering 404 to 415 (PCKHSERRRRSQ) has biased composition (basic residues). Residue Ser-432 is modified to Phosphoserine. Residues 443-453 (SISSQNQQQSS) are compositionally biased toward low complexity. The segment covering 496 to 505 (ECPREEKEET) has biased composition (basic and acidic residues). A Glycyl lysine isopeptide (Lys-Gly) (interchain with G-Cter in SUMO2) cross-link involves residue Lys-530. Positions 533 to 565 (KKVKLEEKTSTAFGKRKEKDKEKKEKRDKDHYK) are enriched in basic and acidic residues. Residues 533–585 (KKVKLEEKTSTAFGKRKEKDKEKKEKRDKDHYKPKQKKKKKKKKKSKQHDYSD) are disordered. The segment covering 566–579 (PKQKKKKKKKKKSK) has biased composition (basic residues). The segment at 681-729 (IVRCICELDEENGFMIQCEECLCWQHSVCMGLLEDSIPEQYICYICRDP) adopts a PHD-type zinc-finger fold. The span at 824 to 852 (RKITPQDRANSEGKECVQNHKEPALRMEE) shows a compositional bias: basic and acidic residues. The tract at residues 824-911 (RKITPQDRAN…LLYKNRGVSE (88 aa)) is disordered. The span at 854 to 878 (YITSEHSYQKPQSFSQDCQSLTDPG) shows a compositional bias: polar residues. The span at 879 to 892 (SSDDDDASSFEEDG) shows a compositional bias: acidic residues. The residue at position 905 (Lys-905) is an N6-acetyllysine.

In terms of assembly, interacts with methylated DNMT1 (DNMT1K142me1). Interacts with SOX2.

The protein resides in the nucleus. Its function is as follows. Is a negative regulator of proteasomal degradation of a set of methylated proteins, including DNMT1 and SOX2. Involved in the maintainance of embryonic stem cells pluripotency, through the regulation of SOX2 levels. This is PHD finger protein 20-like protein 1 (Phf20l1) from Mus musculus (Mouse).